The chain runs to 377 residues: uncharacterized protein (377 aa).

This is an uncharacterized protein from Caenorhabditis elegans.